The sequence spans 229 residues: Non-structural protein V (229 aa).

2 stretches are compositionally biased toward polar residues: residues alanine 30–threonine 46 and glycine 82–proline 112. The segment at alanine 30–proline 112 is disordered. The Zn(2+) site is built by histidine 178, cysteine 197, cysteine 201, cysteine 213, cysteine 215, cysteine 218, cysteine 222, and cysteine 225.

This sequence belongs to the paramyxoviruses V protein family.

Its function is as follows. Blocks host interferon signaling. In Homo sapiens (Human), this protein is Non-structural protein V (P/V).